Here is a 324-residue protein sequence, read N- to C-terminus: MKNAKMIGFGLYTPKNLVENERLQEFLETSDEWIRTRTGIERRYISLDENTSDLAVEASKKALSQARLSAEEIDLIIVATVTPDNFTPSTACIVQDKLGAKNAWAFDINAACTGFIYALKLGRSLIRSGEANNALIIGAETLSKALNWEDRGSCVLFGDGAGATVLTSTEEDCGIKCVNVKSDGSKGDSLVIQGLPLNSPFKDGREVSENYINMNGREIFKFATKVMEESIVEILEKENIKIEDIAAIIPHQANLRIIDYVVKRLGIPREKFITNLQNYGNTSGASIPIALCESIDEGNLKKGDNIIMVGFGGGLTWGAALIKL.

Residues cysteine 112 and histidine 251 contribute to the active site. Residues 252-256 (QANLR) are ACP-binding. Asparagine 281 is an active-site residue.

The protein belongs to the thiolase-like superfamily. FabH family. In terms of assembly, homodimer.

The protein resides in the cytoplasm. It carries out the reaction malonyl-[ACP] + acetyl-CoA + H(+) = 3-oxobutanoyl-[ACP] + CO2 + CoA. The protein operates within lipid metabolism; fatty acid biosynthesis. Catalyzes the condensation reaction of fatty acid synthesis by the addition to an acyl acceptor of two carbons from malonyl-ACP. Catalyzes the first condensation reaction which initiates fatty acid synthesis and may therefore play a role in governing the total rate of fatty acid production. Possesses both acetoacetyl-ACP synthase and acetyl transacylase activities. Its substrate specificity determines the biosynthesis of branched-chain and/or straight-chain of fatty acids. This chain is Beta-ketoacyl-[acyl-carrier-protein] synthase III, found in Clostridium perfringens (strain 13 / Type A).